The chain runs to 617 residues: Proline--tRNA ligase (617 aa).

This sequence belongs to the class-II aminoacyl-tRNA synthetase family. ProS type 1 subfamily. As to quaternary structure, homodimer.

It is found in the cytoplasm. The enzyme catalyses tRNA(Pro) + L-proline + ATP = L-prolyl-tRNA(Pro) + AMP + diphosphate. Functionally, catalyzes the attachment of proline to tRNA(Pro) in a two-step reaction: proline is first activated by ATP to form Pro-AMP and then transferred to the acceptor end of tRNA(Pro). As ProRS can inadvertently accommodate and process non-cognate amino acids such as alanine and cysteine, to avoid such errors it has two additional distinct editing activities against alanine. One activity is designated as 'pretransfer' editing and involves the tRNA(Pro)-independent hydrolysis of activated Ala-AMP. The other activity is designated 'posttransfer' editing and involves deacylation of mischarged Ala-tRNA(Pro). The misacylated Cys-tRNA(Pro) is not edited by ProRS. The chain is Proline--tRNA ligase from Streptococcus agalactiae serotype V (strain ATCC BAA-611 / 2603 V/R).